We begin with the raw amino-acid sequence, 28 residues long: Aspartate aminotransferase, mitochondrial (28 aa).

It belongs to the class-I pyridoxal-phosphate-dependent aminotransferase family. As to quaternary structure, homodimer. It depends on pyridoxal 5'-phosphate as a cofactor.

The protein resides in the mitochondrion matrix. It carries out the reaction L-aspartate + 2-oxoglutarate = oxaloacetate + L-glutamate. In terms of biological role, plays a key role in amino acid metabolism. Important for metabolite exchange between mitochondria and cytosol. The polypeptide is Aspartate aminotransferase, mitochondrial (Catharanthus roseus (Madagascar periwinkle)).